The sequence spans 312 residues: Malate dehydrogenase (312 aa).

NAD(+) is bound by residues 7 to 13 and Asp34; that span reads GAAGGIG. 2 residues coordinate substrate: Arg81 and Arg87. NAD(+) is bound by residues Asn94 and 117–119; that span reads ITN. Substrate is bound by residues Asn119 and Arg153. Catalysis depends on His177, which acts as the Proton acceptor. Met227 is a binding site for NAD(+).

It belongs to the LDH/MDH superfamily. MDH type 1 family. In terms of assembly, homodimer.

The catalysed reaction is (S)-malate + NAD(+) = oxaloacetate + NADH + H(+). Catalyzes the reversible oxidation of malate to oxaloacetate. This chain is Malate dehydrogenase, found in Photorhabdus laumondii subsp. laumondii (strain DSM 15139 / CIP 105565 / TT01) (Photorhabdus luminescens subsp. laumondii).